Here is a 183-residue protein sequence, read N- to C-terminus: Protein Syd (183 aa).

The protein belongs to the Syd family.

The protein localises to the cell inner membrane. Its function is as follows. Interacts with the SecY protein in vivo. May bind preferentially to an uncomplexed state of SecY, thus functioning either as a chelating agent for excess SecY in the cell or as a regulatory factor that negatively controls the translocase function. The protein is Protein Syd of Idiomarina loihiensis (strain ATCC BAA-735 / DSM 15497 / L2-TR).